We begin with the raw amino-acid sequence, 510 residues long: NAD(P)H-quinone oxidoreductase subunit 2 B, chloroplastic (510 aa).

The next 13 membrane-spanning stretches (helical) occupy residues Leu24 to Leu44, Ile57 to Phe77, Ile99 to Ile119, Met124 to Cys144, Leu149 to Tyr169, Tyr183 to Gly203, Pro227 to Ala247, Trp295 to Ile315, Met323 to Asp343, Tyr354 to Leu374, Ala395 to Phe415, Leu418 to Leu438, and Met484 to Ile504.

This sequence belongs to the complex I subunit 2 family. In terms of assembly, NDH is composed of at least 16 different subunits, 5 of which are encoded in the nucleus.

The protein resides in the plastid. Its subcellular location is the chloroplast thylakoid membrane. It catalyses the reaction a plastoquinone + NADH + (n+1) H(+)(in) = a plastoquinol + NAD(+) + n H(+)(out). The catalysed reaction is a plastoquinone + NADPH + (n+1) H(+)(in) = a plastoquinol + NADP(+) + n H(+)(out). Functionally, NDH shuttles electrons from NAD(P)H:plastoquinone, via FMN and iron-sulfur (Fe-S) centers, to quinones in the photosynthetic chain and possibly in a chloroplast respiratory chain. The immediate electron acceptor for the enzyme in this species is believed to be plastoquinone. Couples the redox reaction to proton translocation, and thus conserves the redox energy in a proton gradient. The protein is NAD(P)H-quinone oxidoreductase subunit 2 B, chloroplastic of Guizotia abyssinica (Niger).